Reading from the N-terminus, the 457-residue chain is Bifunctional protein GlmU (457 aa).

The tract at residues 1-230 is pyrophosphorylase; sequence MSKRYAVVLA…FEESLGVNDR (230 aa). UDP-N-acetyl-alpha-D-glucosamine-binding positions include 9-12, K23, Q73, and 78-79; these read LAAG and GT. D103 contributes to the Mg(2+) binding site. UDP-N-acetyl-alpha-D-glucosamine contacts are provided by G140, E155, N170, and N228. N228 provides a ligand contact to Mg(2+). Positions 231-251 are linker; that stretch reads IALAEASKLMQRRINENHMRN. Residues 252–457 are N-acetyltransferase; it reads GVTLVNPEST…GYAKHLNHGK (206 aa). UDP-N-acetyl-alpha-D-glucosamine contacts are provided by R333 and K351. Catalysis depends on H363, which acts as the Proton acceptor. UDP-N-acetyl-alpha-D-glucosamine is bound by residues Y366 and N377. Acetyl-CoA is bound by residues 386–387, A423, and R440; that span reads NY.

It in the N-terminal section; belongs to the N-acetylglucosamine-1-phosphate uridyltransferase family. In the C-terminal section; belongs to the transferase hexapeptide repeat family. In terms of assembly, homotrimer. Mg(2+) serves as cofactor.

It localises to the cytoplasm. The enzyme catalyses alpha-D-glucosamine 1-phosphate + acetyl-CoA = N-acetyl-alpha-D-glucosamine 1-phosphate + CoA + H(+). It carries out the reaction N-acetyl-alpha-D-glucosamine 1-phosphate + UTP + H(+) = UDP-N-acetyl-alpha-D-glucosamine + diphosphate. The protein operates within nucleotide-sugar biosynthesis; UDP-N-acetyl-alpha-D-glucosamine biosynthesis; N-acetyl-alpha-D-glucosamine 1-phosphate from alpha-D-glucosamine 6-phosphate (route II): step 2/2. Its pathway is nucleotide-sugar biosynthesis; UDP-N-acetyl-alpha-D-glucosamine biosynthesis; UDP-N-acetyl-alpha-D-glucosamine from N-acetyl-alpha-D-glucosamine 1-phosphate: step 1/1. It functions in the pathway bacterial outer membrane biogenesis; LPS lipid A biosynthesis. Functionally, catalyzes the last two sequential reactions in the de novo biosynthetic pathway for UDP-N-acetylglucosamine (UDP-GlcNAc). The C-terminal domain catalyzes the transfer of acetyl group from acetyl coenzyme A to glucosamine-1-phosphate (GlcN-1-P) to produce N-acetylglucosamine-1-phosphate (GlcNAc-1-P), which is converted into UDP-GlcNAc by the transfer of uridine 5-monophosphate (from uridine 5-triphosphate), a reaction catalyzed by the N-terminal domain. This is Bifunctional protein GlmU from Listeria monocytogenes serotype 4a (strain HCC23).